The chain runs to 368 residues: Flavanone 3-dioxygenase (368 aa).

The Fe2OG dioxygenase domain occupies 191–295; the sequence is CVDMDQKVIV…RMSIATFQNP (105 aa). Fe cation-binding residues include H218, D220, and H276. R286 contributes to the 2-oxoglutarate binding site.

It belongs to the iron/ascorbate-dependent oxidoreductase family. Requires Fe(2+) as cofactor. L-ascorbate serves as cofactor.

The catalysed reaction is a (2S)-flavan-4-one + 2-oxoglutarate + O2 = a (2R,3R)-dihydroflavonol + succinate + CO2. It functions in the pathway secondary metabolite biosynthesis; flavonoid biosynthesis. Involved in the conversion of (2S)-naringenin to (+)-(2R/3R)-dihydrokaempferol. This Petroselinum crispum (Parsley) protein is Flavanone 3-dioxygenase (FHT).